An 83-amino-acid chain; its full sequence is Scyreptin (83 aa).

In terms of biological role, cationic antimicrobial peptide that exhibits a potent and broad-spectrum antimicrobial activity against both bacteria and fungi, as well as against the multidrug-resistant bacteria P.aeruginosa. Exhibits rapid bactericidal kinetic. Acts by destroying the integrity of bacterial membranes, leading to bacterial death. Also exhibits potent anti-biofilm activity against P.aeruginosa. Shows high thermal stability and ion tolerance, as it maintains antibacterial activity even when heated to 100 degrees Celsius for 30 minutes and in presence of high levels of NaCl, CaCl(2) and MgCl(2). Does not show cytotoxicity and hemolytic activity. In a mouse model of burn infection, exhibits a remarkably reduction in the bacterial load caused by multidrug-resistant P.aeruginosa at the site of infection, and promotes wound healing. The chain is Scyreptin from Scylla paramamosain (Mud crab).